A 296-amino-acid polypeptide reads, in one-letter code: tRNA dimethylallyltransferase (296 aa).

An ATP-binding site is contributed by 11–18; sequence GPTAVGKT. A substrate-binding site is contributed by 13–18; sequence TAVGKT. Residues 36-39 are interaction with substrate tRNA; sequence DSQQ.

Belongs to the IPP transferase family. In terms of assembly, monomer. Requires Mg(2+) as cofactor.

The enzyme catalyses adenosine(37) in tRNA + dimethylallyl diphosphate = N(6)-dimethylallyladenosine(37) in tRNA + diphosphate. Its function is as follows. Catalyzes the transfer of a dimethylallyl group onto the adenine at position 37 in tRNAs that read codons beginning with uridine, leading to the formation of N6-(dimethylallyl)adenosine (i(6)A). This Streptococcus agalactiae serotype Ia (strain ATCC 27591 / A909 / CDC SS700) protein is tRNA dimethylallyltransferase.